The following is a 498-amino-acid chain: Glycerol kinase (498 aa).

T12 lines the ADP pocket. T12, T13, and S14 together coordinate ATP. T12 is a sn-glycerol 3-phosphate binding site. Residue R16 participates in ADP binding. The sn-glycerol 3-phosphate site is built by R82, E83, Y134, and D243. 5 residues coordinate glycerol: R82, E83, Y134, D243, and Q244. ADP-binding residues include T265 and G308. Positions 265, 308, 312, and 409 each coordinate ATP. ADP is bound by residues G409 and N413.

This sequence belongs to the FGGY kinase family.

It catalyses the reaction glycerol + ATP = sn-glycerol 3-phosphate + ADP + H(+). It participates in polyol metabolism; glycerol degradation via glycerol kinase pathway; sn-glycerol 3-phosphate from glycerol: step 1/1. With respect to regulation, inhibited by fructose 1,6-bisphosphate (FBP). In terms of biological role, key enzyme in the regulation of glycerol uptake and metabolism. Catalyzes the phosphorylation of glycerol to yield sn-glycerol 3-phosphate. In Petrotoga mobilis (strain DSM 10674 / SJ95), this protein is Glycerol kinase.